A 171-amino-acid polypeptide reads, in one-letter code: Putative F-box protein At1g32020 (171 aa).

The F-box domain maps to 3–49 (CDRISTLPDHLVAKIVSYLGIKDSIKTSVLSKRWEFVWLKVVGLDLK).

The protein is Putative F-box protein At1g32020 of Arabidopsis thaliana (Mouse-ear cress).